Consider the following 123-residue polypeptide: MYSGICICLLLAMLSASSKAHQSEDAVVTEMDQLTLSQLPRYARASSAGQKKSFQRTDGDQRSNIGNVLVKYLQQSRKAGPSGRYVVLPNRPIFDQPHRINDRDYMGWMDFGRRSAEEYEYSS.

Positions 1–20 (MYSGICICLLLAMLSASSKA) are cleaved as a signal peptide. A propeptide spanning residues 21-103 (HQSEDAVVTE…FDQPHRINDR (83 aa)) is cleaved from the precursor. The residue at position 105 (Tyr-105) is a Sulfotyrosine. Phe-111 is modified (phenylalanine amide). A propeptide spanning residues 115-123 (SAEEYEYSS) is cleaved from the precursor.

This sequence belongs to the gastrin/cholecystokinin family. Post-translationally, the precursor is cleaved by proteases to produce a number of active cholecystokinins. As to expression, brain, gastrointestinal tract and lung.

It is found in the secreted. In Xenopus laevis (African clawed frog), this protein is Cholecystokinin A (cck-a).